Reading from the N-terminus, the 106-residue chain is PAT complex subunit Asterix (106 aa).

The interval 1–29 (MSANNMSDPRRPNKVLRYKPPPSECNPAL) is disordered. The residue at position 2 (Ser2) is an N-acetylserine. The Cytoplasmic portion of the chain corresponds to 2-32 (SANNMSDPRRPNKVLRYKPPPSECNPALDDP). A helical transmembrane segment spans residues 33-51 (TPDYMNLLGMIFSMCGLML). Position 52 (Lys52) is a topological domain, lumenal. The chain crosses the membrane as a helical span at residues 53–70 (LKWCAWVAVYCSFISFAN). The Cytoplasmic segment spans residues 71–74 (SRSS). The helical transmembrane segment at 75–95 (EDTKQMMSSFMLSISAVVMSY) threads the bilayer. Topologically, residues 96-106 (LQNPQPMTPPW) are lumenal.

This sequence belongs to the Asterix family. In terms of assembly, component of the PAT complex, composed of WDR83OS/Asterix and CCDC47. The PAT complex is part of the multi-pass translocon (MPT) complex, composed of three subcomplexes, the GEL complex (composed of RAB5IF/OPTI and TMCO1), the BOS complex (composed of NCLN/Nicalin, NOMO1 and TMEM147) and the PAT complex (composed of WDR83OS/Asterix and CCDC47). The MPT complex associates with the SEC61 complex.

The protein resides in the endoplasmic reticulum membrane. Its function is as follows. Component of the multi-pass translocon (MPT) complex that mediates insertion of multi-pass membrane proteins into the lipid bilayer of membranes. The MPT complex takes over after the SEC61 complex: following membrane insertion of the first few transmembrane segments of proteins by the SEC61 complex, the MPT complex occludes the lateral gate of the SEC61 complex to promote insertion of subsequent transmembrane regions. Within the MPT complex, the PAT subcomplex sequesters any highly polar regions in the transmembrane domains away from the non-polar membrane environment until they can be buried in the interior of the fully assembled protein. Within the PAT subcomplex, WDR83OS/Asterix binds to and redirects the substrate to a location behind the SEC61 complex. The polypeptide is PAT complex subunit Asterix (WDR83OS) (Bos taurus (Bovine)).